The sequence spans 251 residues: Insulin-induced gene 1 protein (251 aa).

The Cytoplasmic segment spans residues 1 to 58; that stretch reads MQTLEEHCWSCSCTRGRDKKGTKVSAWLARRVGKAMSSLNSLLSLAYSTLASSEGRSL. The chain crosses the membrane as a helical span at residues 59–81; it reads IQRSLVLFTVGVFLALVLNLLQI. The Extracellular segment spans residues 82–100; the sequence is QRNVTLFPEEVIATIFSSA. The helical transmembrane segment at 101 to 118 threads the bilayer; it reads WWVPPCCGTAAAVVGLLY. The Cytoplasmic portion of the chain corresponds to 119–133; it reads PCIDSRIGEPHKFKR. Residues 134–156 form a helical membrane-spanning segment; that stretch reads EWASVMRCIAVFVGINHASAKLD. At 157-159 the chain is on the extracellular side; the sequence is FAN. Residues 160–178 form a helical membrane-spanning segment; the sequence is NVQLSLTLAALSLGLWWTF. Topologically, residues 179 to 183 are cytoplasmic; the sequence is DRSRS. The helical transmembrane segment at 184–205 threads the bilayer; that stretch reads GLGLGITIAFLATLITQFLVYN. The Extracellular segment spans residues 206–219; the sequence is GVYQYTSPDFLYIR. Residues 220-237 traverse the membrane as a helical segment; that stretch reads SWLPCIFFSGGVTVGNIG. The Cytoplasmic portion of the chain corresponds to 238 to 251; sequence RQLAMGSSEKTHGD. The KxHxx motif lies at 245–251; sequence SEKTHGD.

Belongs to the INSIG family. In terms of assembly, interacts with scap; interaction is direct and only takes place in the presence of sterols; it prevents interaction between scap and the coat protein complex II (COPII). Associates with the SCAP-SREBP complex; association is mediated via its interaction with scap and only takes place in the presence of sterols.

It localises to the endoplasmic reticulum membrane. Functionally, oxysterol-binding protein that mediates feedback control of cholesterol synthesis by controlling both endoplasmic reticulum to Golgi transport of scap and degradation of hmgcr. Acts as a negative regulator of cholesterol biosynthesis by mediating the retention of the SCAP-SREBP complex in the endoplasmic reticulum, thereby blocking the processing of sterol regulatory element-binding proteins (SREBPs). Binds oxysterol, including 25-hydroxycholesterol, regulating interaction with scap and retention of the SCAP-SREBP complex in the endoplasmic reticulum. In presence of oxysterol, interacts with scap, retaining the SCAP-SREBP complex in the endoplasmic reticulum, thereby preventing scap from escorting SREBPs to the Golgi. Sterol deprivation reduces oxysterol-binding, disrupting the interaction between insig1 and scap, thereby promoting Golgi transport of the SCAP-SREBP complex, followed by processing and nuclear translocation of SREBPs. Also regulates cholesterol synthesis by regulating degradation of hmgcr. The protein is Insulin-induced gene 1 protein of Xenopus laevis (African clawed frog).